We begin with the raw amino-acid sequence, 127 residues long: Large ribosomal subunit protein bL17 (127 aa).

It belongs to the bacterial ribosomal protein bL17 family. As to quaternary structure, part of the 50S ribosomal subunit. Contacts protein L32.

The sequence is that of Large ribosomal subunit protein bL17 from Mannheimia succiniciproducens (strain KCTC 0769BP / MBEL55E).